A 411-amino-acid chain; its full sequence is Arginine deiminase (411 aa).

Residue C401 is the Amidino-cysteine intermediate of the active site.

It belongs to the arginine deiminase family.

It localises to the cytoplasm. It catalyses the reaction L-arginine + H2O = L-citrulline + NH4(+). It participates in amino-acid degradation; L-arginine degradation via ADI pathway; carbamoyl phosphate from L-arginine: step 1/2. This Staphylococcus aureus (strain bovine RF122 / ET3-1) protein is Arginine deiminase.